The sequence spans 202 residues: Nucleoside triphosphate pyrophosphatase (202 aa).

Asp-79 serves as the catalytic Proton acceptor.

It belongs to the Maf family. Requires a divalent metal cation as cofactor.

The protein localises to the cytoplasm. The catalysed reaction is a ribonucleoside 5'-triphosphate + H2O = a ribonucleoside 5'-phosphate + diphosphate + H(+). The enzyme catalyses a 2'-deoxyribonucleoside 5'-triphosphate + H2O = a 2'-deoxyribonucleoside 5'-phosphate + diphosphate + H(+). Functionally, nucleoside triphosphate pyrophosphatase. May have a dual role in cell division arrest and in preventing the incorporation of modified nucleotides into cellular nucleic acids. This Rhodospirillum rubrum (strain ATCC 11170 / ATH 1.1.1 / DSM 467 / LMG 4362 / NCIMB 8255 / S1) protein is Nucleoside triphosphate pyrophosphatase.